The primary structure comprises 544 residues: L-aspartate oxidase (544 aa).

FAD is bound by residues 17 to 20, lysine 39, 46 to 53, and aspartate 221; these read SGGA and STFYAQGG. Arginine 288 acts as the Proton donor/acceptor in catalysis. FAD contacts are provided by residues glutamate 373 and 389-390; that span reads SL.

It belongs to the FAD-dependent oxidoreductase 2 family. NadB subfamily. FAD is required as a cofactor.

The protein resides in the cytoplasm. The enzyme catalyses L-aspartate + O2 = iminosuccinate + H2O2. The protein operates within cofactor biosynthesis; NAD(+) biosynthesis; iminoaspartate from L-aspartate (oxidase route): step 1/1. Functionally, catalyzes the oxidation of L-aspartate to iminoaspartate, the first step in the de novo biosynthesis of NAD(+). This chain is L-aspartate oxidase, found in Acinetobacter baylyi (strain ATCC 33305 / BD413 / ADP1).